The chain runs to 530 residues: Protein transport protein SEC9 (530 aa).

Residues 1–274 are disordered; sequence MGIKKMFQKK…QPANDYNLDL (274 aa). Over residues 8–22 the composition is skewed to basic and acidic residues; it reads QKKEPTEQEIREELS. 2 stretches are compositionally biased toward low complexity: residues 61-100 and 122-141; these read NPYA…NNGG and GSSP…SSNP. The span at 142–160 shows a compositional bias: polar residues; that stretch reads YGNNNGSRSSQNTSSPYAK. The segment covering 161-202 has biased composition (low complexity); it reads STNNSSYSNSPYSGSTVNNGNRGGHSNNSNSSAGGNPYAAGG. 2 stretches are compositionally biased toward polar residues: residues 203 to 228 and 258 to 268; these read RSSQ…RQTQ and RNQQSSQQPAN. 2 consecutive t-SNARE coiled-coil homology domains span residues 313–375 and 467–529; these read KFVK…VKEL and DDME…LNNI.

It belongs to the SNAP-25 family.

It is found in the membrane. Its function is as follows. Late secretory t-SNARE protein required for secretion and proper cytokinesis. Plays an important role in the secretion of virulence-associated extracellular enzymes and vesicle-mediated polarized hyphal growth. In Candida albicans (strain SC5314 / ATCC MYA-2876) (Yeast), this protein is Protein transport protein SEC9 (SEC9).